The following is a 268-amino-acid chain: F-actin-capping protein subunit beta (268 aa).

This sequence belongs to the F-actin-capping protein beta subunit family. As to quaternary structure, component of the F-actin capping complex, composed of a heterodimer of an alpha and a beta subunit.

The protein resides in the cytoplasm. The protein localises to the cytoskeleton. It is found in the actin patch. Its subcellular location is the nucleus. F-actin-capping proteins bind in a Ca(2+)-independent manner to the fast growing ends of actin filaments (barbed end) thereby blocking the exchange of subunits at these ends. Unlike other capping proteins (such as gelsolin and severin), these proteins do not sever actin filaments. Competes with formin cdc12 for attachment to the actin filaments barbed ends. Slowly replaces cdc12 on the barbed ends in preparation for filament disassembly during contractile ring constriction. This chain is F-actin-capping protein subunit beta (acp2), found in Schizosaccharomyces pombe (strain 972 / ATCC 24843) (Fission yeast).